The chain runs to 951 residues: Pentatricopeptide repeat-containing protein At4g19220, mitochondrial (951 aa).

Residues 1–63 constitute a mitochondrion transit peptide; that stretch reads MLLVMVRSST…RHFTSSVLSP (63 aa). PPR repeat units lie at residues 121–151, 152–186, 187–221, 222–252, 253–287, 288–322, 325–355, 356–386, 392–426, 428–458, 459–489, 496–530, 531–561, 563–597, 599–629, 634–668, 669–695, 697–731, 732–762, 763–793, 799–829, and 835–865; these read DLAT…LKEK, DVIV…GNEF, DSTT…GLVG, DSSL…MEHR, DIVS…GQEA, DTVT…GYSP, HVSV…LVCR, DVIS…MQSV, DIAT…EMQS, ALEV…TTHR, DLVS…VVSE, SLST…GFGD, NMLS…MSET, DLTS…GKIR, DLIT…AIKS, DTQL…NLCS, WNCV…LKLE, NEIT…GFQA, NPFV…SGVN, SISA…LSSN, NKSS…MEEK, and VTEH…IGEP. Positions 870-945 are type E motif; sequence VWGALLSACN…LPGYSVIDVR (76 aa).

The protein belongs to the PPR family. PCMP-E subfamily.

The protein localises to the mitochondrion. The protein is Pentatricopeptide repeat-containing protein At4g19220, mitochondrial (PCMP-E2) of Arabidopsis thaliana (Mouse-ear cress).